A 406-amino-acid polypeptide reads, in one-letter code: Probable 26S proteasome regulatory subunit 10B (406 aa).

Gly-191–Thr-198 contacts ATP.

This sequence belongs to the AAA ATPase family.

It is found in the cytoplasm. It localises to the nucleus. The 26S proteasome is involved in the ATP-dependent degradation of ubiquitinated proteins. The regulatory (or ATPase) complex confers ATP dependency and substrate specificity to the 26S complex. This chain is Probable 26S proteasome regulatory subunit 10B (rpt-4), found in Caenorhabditis elegans.